A 692-amino-acid polypeptide reads, in one-letter code: Acyl-coenzyme A oxidase 2, peroxisomal (692 aa).

The N-terminal 49 residues, 1-49 (MESRREKNPMTEEESDGLIAARRIQRLSLHLSPSLTPSPSLPLVQTETC), are a transit peptide targeting the peroxisome. Residues Thr-186, Ser-192, Gly-225, Arg-365, Gln-384, Gly-452, and Thr-473 each contribute to the FAD site. Catalysis depends on Glu-475, which acts as the Proton acceptor. Asp-477 is a binding site for FAD.

This sequence belongs to the acyl-CoA oxidase family. Homodimer. FAD serves as cofactor. Expressed mainly in flowers and young seedlings. Lower expression in roots, leaves and bracts.

It is found in the peroxisome. The enzyme catalyses a 2,3-saturated acyl-CoA + O2 = a (2E)-enoyl-CoA + H2O2. Catalyzes the desaturation of long-chain acyl-CoAs to 2-trans-enoyl-CoAs. Active on substrates longer than C14 and mostly with C18-CoA. Activity on long-chain mono-unsaturated substrates is double than with the corresponding saturated substrates. The chain is Acyl-coenzyme A oxidase 2, peroxisomal from Arabidopsis thaliana (Mouse-ear cress).